The following is a 622-amino-acid chain: Deoxynucleoside triphosphate triphosphohydrolase SAMHD1 (622 aa).

Residues 26–89 enclose the SAM domain; sequence WDVEDTVAYL…LHCLQKLSQI (64 aa). Residues lysine 95 and valine 96 each coordinate GTP. Position 98 (asparagine 98) interacts with dGTP. Residues aspartate 116, glutamine 121, and arginine 124 each coordinate GTP. DGTP-binding residues include glutamine 128, leucine 129, valine 135, and arginine 143. Glutamine 128 is a binding site for dATP. DCTP is bound at residue glutamine 128. Glutamine 128 is a binding site for dTTP. Residue arginine 143 coordinates dATP. Arginine 143 contacts dCTP. Residue arginine 143 coordinates dTTP. An HD domain is found at 143–296; sequence RFEHSIGVGY…GIDVDKWDYF (154 aa). Histidine 146, histidine 185, and aspartate 186 together coordinate Mn(2+). The dATP site is built by histidine 189 and histidine 194. DCTP contacts are provided by histidine 189 and histidine 194. DTTP is bound by residues histidine 189 and histidine 194. Histidine 212 is an active-site residue. Aspartate 291 contacts Mn(2+). DGTP contacts are provided by lysine 292, tyrosine 295, aspartate 299, arginine 313, arginine 332, lysine 334, asparagine 338, arginine 346, tyrosine 354, glutamine 355, histidine 356, and lysine 357. Residues lysine 292, tyrosine 295, and aspartate 299 each coordinate dATP. Lysine 292, tyrosine 295, and aspartate 299 together coordinate dCTP. DTTP is bound by residues lysine 292, tyrosine 295, and aspartate 299. Arginine 346 lines the dATP pocket. Arginine 346 provides a ligand contact to dCTP. Residue glutamine 355 coordinates dATP. A dCTP-binding site is contributed by glutamine 355. Glutamine 355 serves as a coordination point for dTTP. GTP-binding residues include arginine 431, lysine 435, and lysine 502. Lysine 502 contributes to the dGTP binding site. The tract at residues 571-622 is disordered; that stretch reads TPLKQDWHAREDEDEEEEEKHRQNQTLPHHTPQRTGRNVKVDLFQARGETKL. Residues 594–606 show a composition bias toward polar residues; the sequence is NQTLPHHTPQRTG.

This sequence belongs to the SAMHD1 family. Homodimer; in absence of GTP and dNTP. Homotetramer; in GTP- and dNTP-bound form. Interacts with rbbp8/CtIP. Zn(2+) serves as cofactor.

It localises to the nucleus. It is found in the chromosome. It carries out the reaction a 2'-deoxyribonucleoside 5'-triphosphate + H2O = a 2'-deoxyribonucleoside + triphosphate + H(+). The catalysed reaction is dATP + H2O = 2'-deoxyadenosine + triphosphate + H(+). It catalyses the reaction dCTP + H2O = 2'-deoxycytidine + triphosphate + H(+). The enzyme catalyses dGTP + H2O = 2'-deoxyguanosine + triphosphate + H(+). It carries out the reaction dTTP + H2O = thymidine + triphosphate + H(+). With respect to regulation, allosterically activated and regulated via the combined actions of GTP and dNTPs (dATP, dGTP, dTTP and dCTP): Allosteric site 1 binds GTP, while allosteric site 2 binds dNTP. Allosteric activation promotes the formation of highly active homotetramers. Functionally, protein that acts both as a host restriction factor involved in defense response to virus and as a regulator of DNA end resection at stalled replication forks. Has deoxynucleoside triphosphate (dNTPase) activity, which is required to restrict infection by viruses: dNTPase activity reduces cellular dNTP levels to levels too low for retroviral reverse transcription to occur, blocking early-stage virus replication in dendritic and other myeloid cells. Functions during S phase at stalled DNA replication forks to promote the resection of gapped or reversed forks: acts by stimulating the exonuclease activity of MRE11, activating the ATR-CHK1 pathway and allowing the forks to restart replication. Its ability to promote degradation of nascent DNA at stalled replication forks is required to prevent induction of type I interferons, thereby preventing chronic inflammation. Ability to promote DNA end resection at stalled replication forks is independent of dNTPase activity. This is Deoxynucleoside triphosphate triphosphohydrolase SAMHD1 from Danio rerio (Zebrafish).